Here is a 320-residue protein sequence, read N- to C-terminus: Glutathione synthetase (320 aa).

The region spanning 130–315 is the ATP-grasp domain; it reads KIFTSWFPDL…ITGMLLDYIE (186 aa). Residue 156–212 participates in ATP binding; sequence WEKYQDIIIKPLDAMGGANIFRIKKNDPNFSVIVENMTNYERKYCMVQNYLPEIKLG. Positions 286 and 288 each coordinate Mg(2+).

Belongs to the prokaryotic GSH synthase family. Requires Mg(2+) as cofactor. Mn(2+) is required as a cofactor.

It carries out the reaction gamma-L-glutamyl-L-cysteine + glycine + ATP = glutathione + ADP + phosphate + H(+). The protein operates within sulfur metabolism; glutathione biosynthesis; glutathione from L-cysteine and L-glutamate: step 2/2. The chain is Glutathione synthetase from Buchnera aphidicola subsp. Acyrthosiphon pisum (strain APS) (Acyrthosiphon pisum symbiotic bacterium).